The primary structure comprises 196 residues: MSQQIKLLVGLANPGPEYAKTRHNAGAWVVEELARVHNITLKNEAKFYGLTGRIVMNGQELRLLIPTTFMNLSGKAIAALAKFYQIQPEEIMVAHDELDLPPGIAKFKKGGGHGGHNGLRDTISKLGNNKEFYRLRIGIGHPGHKDKVAGFVLGKAPASEQSLLDATVDESVRCLDILIKDGLSKAQNRLHTFKAE.

Tyr-18 contacts tRNA. Catalysis depends on His-23, which acts as the Proton acceptor. TRNA-binding residues include Phe-69, Asn-71, and Asn-117.

This sequence belongs to the PTH family. Monomer.

The protein localises to the cytoplasm. It catalyses the reaction an N-acyl-L-alpha-aminoacyl-tRNA + H2O = an N-acyl-L-amino acid + a tRNA + H(+). Its function is as follows. Hydrolyzes ribosome-free peptidyl-tRNAs (with 1 or more amino acids incorporated), which drop off the ribosome during protein synthesis, or as a result of ribosome stalling. Catalyzes the release of premature peptidyl moieties from peptidyl-tRNA molecules trapped in stalled 50S ribosomal subunits, and thus maintains levels of free tRNAs and 50S ribosomes. The protein is Peptidyl-tRNA hydrolase of Vibrio vulnificus (strain CMCP6).